Consider the following 331-residue polypeptide: D-galactose/methyl-galactoside binding periplasmic protein MglB (331 aa).

A signal peptide spans methionine 1–alanine 24. Beta-D-galactose is bound by residues aspartate 38 and asparagine 115. Beta-D-glucose is bound by residues aspartate 38 and asparagine 115. Residues aspartate 158, asparagine 160, aspartate 162, lysine 164, and glutamine 166 each contribute to the Ca(2+) site. Residues histidine 176, aspartate 178, and arginine 182 each coordinate beta-D-galactose. Positions 176, 178, and 182 each coordinate beta-D-glucose. Glutamate 229 provides a ligand contact to Ca(2+). Asparagine 235, aspartate 259, and asparagine 279 together coordinate beta-D-galactose. Beta-D-glucose-binding residues include asparagine 235, aspartate 259, and asparagine 279.

This sequence belongs to the bacterial solute-binding protein 2 family. In terms of assembly, the ABC transporter complex is composed of one ATP-binding protein (MglA), two transmembrane proteins (MglC) and a solute-binding protein (MglB).

The protein resides in the periplasm. Its function is as follows. Part of the ABC transporter complex MglABC involved in galactose/methyl galactoside import. The protein is D-galactose/methyl-galactoside binding periplasmic protein MglB (mglB) of Haemophilus influenzae (strain ATCC 51907 / DSM 11121 / KW20 / Rd).